A 78-amino-acid chain; its full sequence is uncharacterized protein (78 aa).

Residues Ser-13–Ala-33 form a helical membrane-spanning segment.

It is found in the membrane. This is an uncharacterized protein from Methanocaldococcus jannaschii (strain ATCC 43067 / DSM 2661 / JAL-1 / JCM 10045 / NBRC 100440) (Methanococcus jannaschii).